A 492-amino-acid polypeptide reads, in one-letter code: Catalase (492 aa).

Catalysis depends on residues His-65 and Asn-138. Tyr-348 lines the heme pocket.

This sequence belongs to the catalase family. Homotetramer. Heme is required as a cofactor.

The protein localises to the cytoplasm. The protein resides in the cytosol. It is found in the peroxisome matrix. The enzyme catalyses 2 H2O2 = O2 + 2 H2O. In terms of biological role, catalyzes the degradation of hydrogen peroxide (H(2)O(2)) generated by peroxisomal oxidases to water and oxygen, thereby protecting cells from the toxic effects of hydrogen peroxide. This Triticum aestivum (Wheat) protein is Catalase (CATA).